Consider the following 136-residue polypeptide: ATP synthase F(0) complex subunit C1, mitochondrial (136 aa).

Residues 1–61 constitute a mitochondrion transit peptide; that stretch reads MQTTGALLIS…REFQTSVVSR (61 aa). A helical transmembrane segment spans residues 77–97; the sequence is VGVAGSGAGIGTVFGSLIIGY. An N6,N6,N6-trimethyllysine modification is found at Lys104. The chain crosses the membrane as a helical span at residues 112 to 132; that stretch reads ILGFALSEAMGLFCLMVAFLI.

This sequence belongs to the ATPase C chain family. In terms of assembly, homooctamer; the c-ring consists of eight c subunits forming a circle, and each subunit adopts a hairpin shape. Component of the ATP synthase complex composed at least of ATP5F1A/subunit alpha, ATP5F1B/subunit beta, ATP5MC1/subunit c (homooctomer), MT-ATP6/subunit a, MT-ATP8/subunit 8, ATP5ME/subunit e, ATP5MF/subunit f, ATP5MG/subunit g, ATP5MK/subunit k, ATP5MJ/subunit j, ATP5F1C/subunit gamma, ATP5F1D/subunit delta, ATP5F1E/subunit epsilon, ATP5PF/subunit F6, ATP5PB/subunit b, ATP5PD/subunit d, ATP5PO/subunit OSCP. ATP synthase complex consists of a soluble F(1) head domain (subunits alpha(3) and beta(3)) - the catalytic core - and a membrane F(0) domain - the membrane proton channel (subunits c, a, 8, e, f, g, k and j). These two domains are linked by a central stalk (subunits gamma, delta, and epsilon) rotating inside the F1 region and a stationary peripheral stalk (subunits F6, b, d, and OSCP). Interacts with TMEM70 (homooligomer form); this interaction facilitates the oligomer formation of subunit c/ATP5MC1 (c-ring) and the c-ring membrane insertion and also protects ATP5MC1 against intramitochondrial proteolysis. Trimethylated by ATPSCKMT at Lys-104. Methylation is required for proper incorporation of the C subunit into the ATP synthase complex and mitochondrial respiration.

It is found in the mitochondrion membrane. It catalyses the reaction H(+)(in) = H(+)(out). Its function is as follows. Subunit c, of the mitochondrial membrane ATP synthase complex (F(1)F(0) ATP synthase or Complex V) that produces ATP from ADP in the presence of a proton gradient across the membrane which is generated by electron transport complexes of the respiratory chain. ATP synthase complex consist of a soluble F(1) head domain - the catalytic core - and a membrane F(1) domain - the membrane proton channel. These two domains are linked by a central stalk rotating inside the F(1) region and a stationary peripheral stalk. During catalysis, ATP synthesis in the catalytic domain of F(1) is coupled via a rotary mechanism of the central stalk subunits to proton translocation. With the subunit a (MT-ATP6), forms the proton-conducting channel in the F(0) domain, that contains two crucial half-channels (inlet and outlet) that facilitate proton movement from the mitochondrial intermembrane space (IMS) into the matrix. Protons are taken up via the inlet half-channel and released through the outlet half-channel, following a Grotthuss mechanism. This chain is ATP synthase F(0) complex subunit C1, mitochondrial, found in Bos taurus (Bovine).